The following is a 691-amino-acid chain: DNA ligase (691 aa).

NAD(+) is bound by residues 36 to 40 (DAEYD), 85 to 86 (SL), and Glu118. Catalysis depends on Lys120, which acts as the N6-AMP-lysine intermediate. NAD(+) contacts are provided by Arg141, Glu178, Lys295, and Lys319. Positions 413, 416, 431, and 437 each coordinate Zn(2+). Residues 595–684 (GRPQPLAGQT…ESASSEDAQP (90 aa)) form the BRCT domain.

Belongs to the NAD-dependent DNA ligase family. LigA subfamily. It depends on Mg(2+) as a cofactor. Mn(2+) serves as cofactor.

It carries out the reaction NAD(+) + (deoxyribonucleotide)n-3'-hydroxyl + 5'-phospho-(deoxyribonucleotide)m = (deoxyribonucleotide)n+m + AMP + beta-nicotinamide D-nucleotide.. Functionally, DNA ligase that catalyzes the formation of phosphodiester linkages between 5'-phosphoryl and 3'-hydroxyl groups in double-stranded DNA using NAD as a coenzyme and as the energy source for the reaction. It is essential for DNA replication and repair of damaged DNA. The chain is DNA ligase from Chromohalobacter salexigens (strain ATCC BAA-138 / DSM 3043 / CIP 106854 / NCIMB 13768 / 1H11).